The primary structure comprises 118 residues: uncharacterized protein (118 aa).

The next 2 membrane-spanning stretches (helical) occupy residues 5–25 and 40–57; these read AFFN…SMVI and FLTF…QHYI.

The protein resides in the membrane. This is an uncharacterized protein from African swine fever virus (strain Badajoz 1971 Vero-adapted) (Ba71V).